The sequence spans 154 residues: Large ribosomal subunit protein uL23y (154 aa).

This sequence belongs to the universal ribosomal protein uL23 family.

Its function is as follows. Binds to a specific region on the 26S rRNA. The polypeptide is Large ribosomal subunit protein uL23y (RPL23AB) (Arabidopsis thaliana (Mouse-ear cress)).